Here is a 562-residue protein sequence, read N- to C-terminus: Glutamine--tRNA ligase (562 aa).

The 'HIGH' region motif lies at 35 to 45 (PEPNGYLHIGH). ATP contacts are provided by residues 36-38 (EPN) and 42-48 (HIGHAKS). L-glutamine-binding residues include D68 and Y213. ATP is bound by residues T232 and 264 to 265 (RL). The short motif at 271 to 275 (ITSKR) is the 'KMSKS' region element.

Belongs to the class-I aminoacyl-tRNA synthetase family. In terms of assembly, monomer.

The protein resides in the cytoplasm. It carries out the reaction tRNA(Gln) + L-glutamine + ATP = L-glutaminyl-tRNA(Gln) + AMP + diphosphate. This Neisseria meningitidis serogroup A / serotype 4A (strain DSM 15465 / Z2491) protein is Glutamine--tRNA ligase.